The following is a 31-amino-acid chain: Cytochrome b6-f complex subunit 6 (31 aa).

Residues 4 to 24 (ITSYFGFLLAALTITSALFIG) form a helical membrane-spanning segment.

Belongs to the PetL family. As to quaternary structure, the 4 large subunits of the cytochrome b6-f complex are cytochrome b6, subunit IV (17 kDa polypeptide, PetD), cytochrome f and the Rieske protein, while the 4 small subunits are PetG, PetL, PetM and PetN. The complex functions as a dimer.

It localises to the plastid. It is found in the chloroplast thylakoid membrane. In terms of biological role, component of the cytochrome b6-f complex, which mediates electron transfer between photosystem II (PSII) and photosystem I (PSI), cyclic electron flow around PSI, and state transitions. PetL is important for photoautotrophic growth as well as for electron transfer efficiency and stability of the cytochrome b6-f complex. The protein is Cytochrome b6-f complex subunit 6 of Gossypium hirsutum (Upland cotton).